A 433-amino-acid polypeptide reads, in one-letter code: Enolase (433 aa).

Gln167 lines the (2R)-2-phosphoglycerate pocket. Glu209 acts as the Proton donor in catalysis. Mg(2+) contacts are provided by Asp246, Glu291, and Asp318. 4 residues coordinate (2R)-2-phosphoglycerate: Lys343, Arg372, Ser373, and Lys394. Lys343 (proton acceptor) is an active-site residue.

It belongs to the enolase family. Component of the RNA degradosome, a multiprotein complex involved in RNA processing and mRNA degradation. Requires Mg(2+) as cofactor.

It localises to the cytoplasm. Its subcellular location is the secreted. The protein resides in the cell surface. It carries out the reaction (2R)-2-phosphoglycerate = phosphoenolpyruvate + H2O. It functions in the pathway carbohydrate degradation; glycolysis; pyruvate from D-glyceraldehyde 3-phosphate: step 4/5. Catalyzes the reversible conversion of 2-phosphoglycerate (2-PG) into phosphoenolpyruvate (PEP). It is essential for the degradation of carbohydrates via glycolysis. This is Enolase from Shewanella piezotolerans (strain WP3 / JCM 13877).